We begin with the raw amino-acid sequence, 87 residues long: Small ribosomal subunit protein eS21 (87 aa).

N-acetylmethionine is present on Met1.

This sequence belongs to the eukaryotic ribosomal protein eS21 family. Component of the small ribosomal subunit (SSU). Mature yeast ribosomes consist of a small (40S) and a large (60S) subunit. The 40S small subunit contains 1 molecule of ribosomal RNA (18S rRNA) and at least 33 different proteins. The large 60S subunit contains 3 rRNA molecules (25S, 5.8S and 5S rRNA) and at least 46 different proteins. Interacts with uS2A and uS2B, strongest interaction is with uS2B.

It is found in the cytoplasm. It localises to the nucleus. Its function is as follows. Component of the ribosome, a large ribonucleoprotein complex responsible for the synthesis of proteins in the cell. The small ribosomal subunit (SSU) binds messenger RNAs (mRNAs) and translates the encoded message by selecting cognate aminoacyl-transfer RNA (tRNA) molecules. The large subunit (LSU) contains the ribosomal catalytic site termed the peptidyl transferase center (PTC), which catalyzes the formation of peptide bonds, thereby polymerizing the amino acids delivered by tRNAs into a polypeptide chain. The nascent polypeptides leave the ribosome through a tunnel in the LSU and interact with protein factors that function in enzymatic processing, targeting, and the membrane insertion of nascent chains at the exit of the ribosomal tunnel. eS21 is required for the processing of the 20S rRNA-precursor to mature 18S rRNA in a late step of the maturation of 40S ribosomal subunits. Has a physiological role leading to 18S rRNA stability. This Schizosaccharomyces pombe (strain 972 / ATCC 24843) (Fission yeast) protein is Small ribosomal subunit protein eS21 (rps21).